Reading from the N-terminus, the 264-residue chain is Somatomedin-B and thrombospondin type-1 domain-containing protein (264 aa).

The first 20 residues, 1–20 (MRTLWMALCVLARLWPGALA), serve as a signal peptide directing secretion. The 52-residue stretch at 24-75 (DAGRCCPGRDPACFASGWRQDRVYGTCFCDQACRLTGDCCFDYARACPARPC) folds into the SMB domain. Cystine bridges form between Cys28–Cys36, Cys28–Cys52, Cys36–Cys70, Cys50–Cys52, Cys50–Cys63, Cys56–Cys62, and Cys63–Cys70. One can recognise a TSP type-1 domain in the interval 74–127 (PCIVGEWSPWSGCASQCRPTARVRRRAVQQEPQNGGEPCPALEERAGCLEYATP). A glycan (N-linked (GlcNAc...) asparagine) is linked at Asn227.

This sequence belongs to the thrombospondin family.

It localises to the secreted. It is found in the extracellular space. The protein localises to the extracellular matrix. The sequence is that of Somatomedin-B and thrombospondin type-1 domain-containing protein (SBSPON) from Bos taurus (Bovine).